A 68-amino-acid polypeptide reads, in one-letter code: Large ribosomal subunit protein bL35 (68 aa).

This sequence belongs to the bacterial ribosomal protein bL35 family.

The sequence is that of Large ribosomal subunit protein bL35 from Rickettsia felis (strain ATCC VR-1525 / URRWXCal2) (Rickettsia azadi).